The primary structure comprises 890 residues: Possible lysine-specific histone demethylase 1 (890 aa).

The segment covering 1–13 (MKPTQFGGSSSKM) has biased composition (polar residues). Residues 1–164 (MKPTQFGGSS…TVLSGQEGAV (164 aa)) are disordered. A phosphoserine mark is found at serine 24 and serine 27. Residues 84–109 (NRPSGSGDTASNDKSGSASMGPNNQQ) show a composition bias toward polar residues. Basic and acidic residues predominate over residues 110 to 122 (AERRSQSQTRKSE). A compositionally biased stretch (low complexity) spans 123-138 (ANATSSSVSGPSAGNS). The SWIRM domain occupies 160–259 (QEGAVFQSRL…FGIFKRLKPI (100 aa)). Residue 267–295 (VIVIGAGISGLAVAHQLQQFGMDVIVLEA) participates in FAD binding. The tract at residues 860–890 (DLSPNLSDSSPSSKKSEENSNSNTADSTELQ) is disordered. Residues 861–882 (LSPNLSDSSPSSKKSEENSNSN) are compositionally biased toward low complexity. The residue at position 866 (serine 866) is a Phosphoserine.

Belongs to the flavin monoamine oxidase family. As to quaternary structure, component of a complex that contains at least HDAC1/Rpd3, CoRest and Su(var)3-3/Hdm. Requires FAD as cofactor.

The protein localises to the nucleus. It is found in the chromosome. Functionally, probable histone demethylase that specifically demethylates 'Lys-4' of histone H3, a specific tag for epigenetic transcriptional activation, thereby acting as a corepressor. Required for heterochromatic gene silencing. Acts by oxidizing the substrate by FAD to generate the corresponding imine that is subsequently hydrolyzed. Demethylates both mono- and tri-methylated 'Lys-4' of histone H3. May also demethylate 'Lys-9' of histone H3, Plays a role in the repression of neuronal genes. The protein is Possible lysine-specific histone demethylase 1 (Su(var)3-3) of Drosophila melanogaster (Fruit fly).